Consider the following 78-residue polypeptide: Major outer membrane lipoprotein Lpp (78 aa).

A signal peptide spans 1-20 (MNRTKLVLGAVILGSTLLAG). The N-palmitoyl cysteine moiety is linked to residue Cys21. The S-diacylglycerol cysteine moiety is linked to residue Cys21. 2 consecutive repeats follow at residues 24 to 34 (NAKIDQLSSDV) and 38 to 48 (NAKVDQLSNDV). A coiled-coil region spans residues 27–75 (IDQLSSDVQTLNAKVDQLSNDVNAIRSDVQAAKDDAARANQRLDNQVRT). N6-murein peptidoglycan lysine is present on Lys78.

The protein belongs to the Lpp family. In terms of assembly, homotrimer.

It localises to the cell outer membrane. The protein localises to the secreted. Its subcellular location is the cell wall. Functionally, a highly abundant outer membrane lipoprotein that controls the distance between the inner and outer membranes. The only protein known to be covalently linked to the peptidoglycan network (PGN). Also non-covalently binds the PGN. The link between the cell outer membrane and PGN contributes to maintenance of the structural and functional integrity of the cell envelope, and maintains the correct distance between the PGN and the outer membrane. The polypeptide is Major outer membrane lipoprotein Lpp (Pectobacterium atrosepticum (strain SCRI 1043 / ATCC BAA-672) (Erwinia carotovora subsp. atroseptica)).